An 86-amino-acid polypeptide reads, in one-letter code: Small ribosomal subunit protein uS17 (86 aa).

Belongs to the universal ribosomal protein uS17 family. In terms of assembly, part of the 30S ribosomal subunit.

In terms of biological role, one of the primary rRNA binding proteins, it binds specifically to the 5'-end of 16S ribosomal RNA. The polypeptide is Small ribosomal subunit protein uS17 (Exiguobacterium sp. (strain ATCC BAA-1283 / AT1b)).